A 205-amino-acid polypeptide reads, in one-letter code: Holliday junction branch migration complex subunit RuvA (205 aa).

The tract at residues 1–64 (MIGRLRGVLV…EDAQLLYGFI (64 aa)) is domain I. The interval 65–143 (TKQERALFRL…SLLETSAGSE (79 aa)) is domain II. Positions 144–156 (REFMLKSNYTPAP) are flexible linker. Positions 157 to 205 (VVNTAEEDAIAALLSLGYKPAQASKAVSAAFKEGMSSEDLIKSSLKSML) are domain III.

Belongs to the RuvA family. As to quaternary structure, homotetramer. Forms an RuvA(8)-RuvB(12)-Holliday junction (HJ) complex. HJ DNA is sandwiched between 2 RuvA tetramers; dsDNA enters through RuvA and exits via RuvB. An RuvB hexamer assembles on each DNA strand where it exits the tetramer. Each RuvB hexamer is contacted by two RuvA subunits (via domain III) on 2 adjacent RuvB subunits; this complex drives branch migration. In the full resolvosome a probable DNA-RuvA(4)-RuvB(12)-RuvC(2) complex forms which resolves the HJ.

It localises to the cytoplasm. The RuvA-RuvB-RuvC complex processes Holliday junction (HJ) DNA during genetic recombination and DNA repair, while the RuvA-RuvB complex plays an important role in the rescue of blocked DNA replication forks via replication fork reversal (RFR). RuvA specifically binds to HJ cruciform DNA, conferring on it an open structure. The RuvB hexamer acts as an ATP-dependent pump, pulling dsDNA into and through the RuvAB complex. HJ branch migration allows RuvC to scan DNA until it finds its consensus sequence, where it cleaves and resolves the cruciform DNA. The protein is Holliday junction branch migration complex subunit RuvA of Shewanella woodyi (strain ATCC 51908 / MS32).